The sequence spans 254 residues: Ribosomal RNA small subunit methyltransferase G (254 aa).

Positions 84–109 are insert; that stretch reads NTESKTSLNNAETKNTNEALLTSEPF. S-adenosyl-L-methionine contacts are provided by residues Gly115, Phe120, 171-172, and Arg185; that span reads AE.

The protein belongs to the methyltransferase superfamily. RNA methyltransferase RsmG family.

The protein localises to the cytoplasm. Its function is as follows. Specifically methylates the N7 position of a guanine in 16S rRNA. In Treponema denticola (strain ATCC 35405 / DSM 14222 / CIP 103919 / JCM 8153 / KCTC 15104), this protein is Ribosomal RNA small subunit methyltransferase G.